Reading from the N-terminus, the 401-residue chain is All trans-polyprenyl-diphosphate synthase PDSS2 (401 aa).

This sequence belongs to the FPP/GGPP synthase family. In terms of assembly, heterotetramer composed of 2 PDSS1/DPS1 and 2 PDSS2/DLP1 subunits.

The protein resides in the mitochondrion. It catalyses the reaction 7 isopentenyl diphosphate + (2E,6E)-farnesyl diphosphate = all-trans-decaprenyl diphosphate + 7 diphosphate. The catalysed reaction is 6 isopentenyl diphosphate + (2E,6E)-farnesyl diphosphate = all-trans-nonaprenyl diphosphate + 6 diphosphate. It functions in the pathway cofactor biosynthesis; ubiquinone biosynthesis. Heterotetrameric enzyme that catalyzes the condensation of farnesyl diphosphate (FPP), which acts as a primer, and isopentenyl diphosphate (IPP) to produce prenyl diphosphates of varying chain lengths and participates in the determination of the side chain of ubiquinone. Supplies nona and decaprenyl diphosphate, the precursors for the side chain of the isoprenoid quinones ubiquinone-9 (Q9) and ubiquinone-10 (Q10) respectively. The enzyme adds isopentenyl diphosphate molecules sequentially to farnesyl diphosphate with trans stereochemistry. May play a role during cerebellar development. May regulate mitochondrial respiratory chain function. In Rattus norvegicus (Rat), this protein is All trans-polyprenyl-diphosphate synthase PDSS2.